The primary structure comprises 125 residues: Egg cell-secreted protein 1.3 (125 aa).

Residues 1–24 (MASNTSFLFVTVTLLLVLNVSSRA) form the signal peptide.

The protein belongs to the plant egg cell-secreted peptide family. In terms of tissue distribution, restricted to female reproductive tissues, specifically accumulating in storage vesicles of the unfertilized egg cell.

The protein localises to the cytoplasmic vesicle. The protein resides in the secreted. In terms of biological role, involved in the regulation of gamete interactions during the double fertilization and to prevent multiple-pollen tube attraction; mediates the redistribution of the gamete fusogen HAP2/GCS1 to the cell surface after secretion upon sperm arrival. In Arabidopsis thaliana (Mouse-ear cress), this protein is Egg cell-secreted protein 1.3 (EC1.3).